A 378-amino-acid chain; its full sequence is Filamin-binding LIM protein 1 (378 aa).

The segment at 1-69 (MASKPEKRVA…RSWMPPGRAA (69 aa)) is filamin-binding. A disordered region spans residues 38–179 (WPGRPWESAP…PPPEEPVSFP (142 aa)). Positions 103-115 (LPPPPPPPAADLP) are enriched in pro residues. LIM zinc-binding domains are found at residues 186–247 (DICA…TLEK), 248–305 (CGKC…RKFA), and 306–375 (PVCS…RSAA). The segment at 281–378 (IGDESFALDS…HVKRSAAGCC (98 aa)) is PLEKHC1-binding.

As to quaternary structure, interacts with PLEKHC1, FLNA, FLNB and FLNC. Interacts with NKX2-5.

The protein localises to the cell junction. It localises to the focal adhesion. It is found in the cytoplasm. Its subcellular location is the cytoskeleton. The protein resides in the stress fiber. Functionally, serves as an anchoring site for cell-ECM adhesion proteins and filamin-containing actin filaments. Is implicated in cell shape modulation (spreading) and motility. May participate in the regulation of filamin-mediated cross-linking and stabilization of actin filaments. May also regulate the assembly of filamin-containing signaling complexes that control actin assembly. Promotes dissociation of FLNA from ITGB3 and ITGB7. Promotes activation of integrins and regulates integrin-mediated cell-cell adhesion. The protein is Filamin-binding LIM protein 1 (FBLIM1) of Bos taurus (Bovine).